The sequence spans 102 residues: Large ribosomal subunit protein uL24 (102 aa).

It belongs to the universal ribosomal protein uL24 family. Part of the 50S ribosomal subunit.

One of two assembly initiator proteins, it binds directly to the 5'-end of the 23S rRNA, where it nucleates assembly of the 50S subunit. In terms of biological role, one of the proteins that surrounds the polypeptide exit tunnel on the outside of the subunit. This Leuconostoc mesenteroides subsp. mesenteroides (strain ATCC 8293 / DSM 20343 / BCRC 11652 / CCM 1803 / JCM 6124 / NCDO 523 / NBRC 100496 / NCIMB 8023 / NCTC 12954 / NRRL B-1118 / 37Y) protein is Large ribosomal subunit protein uL24.